A 190-amino-acid polypeptide reads, in one-letter code: Adenine phosphoribosyltransferase (190 aa).

It belongs to the purine/pyrimidine phosphoribosyltransferase family. Homodimer.

It localises to the cytoplasm. The enzyme catalyses AMP + diphosphate = 5-phospho-alpha-D-ribose 1-diphosphate + adenine. Its pathway is purine metabolism; AMP biosynthesis via salvage pathway; AMP from adenine: step 1/1. In terms of biological role, catalyzes a salvage reaction resulting in the formation of AMP, that is energically less costly than de novo synthesis. The chain is Adenine phosphoribosyltransferase from Treponema denticola (strain ATCC 35405 / DSM 14222 / CIP 103919 / JCM 8153 / KCTC 15104).